A 415-amino-acid polypeptide reads, in one-letter code: uncharacterized protein (415 aa).

Helical transmembrane passes span 20 to 40 (MAYL…FGIL), 43 to 63 (LMPI…PAIA), 78 to 98 (IPIL…TPYI), 109 to 129 (LPNI…VIAF), 155 to 175 (VILV…LSIS), 243 to 263 (IVIM…SSLI), 300 to 320 (IFSS…LIAF), 328 to 348 (GILC…YTLI), 360 to 380 (ISFY…LILV), and 388 to 408 (GSLA…FAIL).

This sequence belongs to the polysaccharide synthase family.

The protein localises to the cell membrane. This is an uncharacterized protein from Methanocaldococcus jannaschii (strain ATCC 43067 / DSM 2661 / JAL-1 / JCM 10045 / NBRC 100440) (Methanococcus jannaschii).